A 174-amino-acid polypeptide reads, in one-letter code: I-Kappa-B like protein C1 (174 aa).

ANK repeat units lie at residues 56 to 88 and 93 to 123; these read RGRQ…DINA and TGNS…NLGA.

This sequence belongs to the polydnaviridae I-Kappa-B-like protein family.

Its function is as follows. Suppresses the host immune response through NF-kappa-B inactivation. Possesses ankyrin repeat domains required for NF-kappa-B binding but lacks the regulatory regions required for dissociation from NF-kappa-B and degradation. Therefore, prevents host NF-kappa-B release and subsequent activation. This Microplitis demolitor bracovirus (isolate Webb) (MdBV) protein is I-Kappa-B like protein C1 (C1).